The chain runs to 235 residues: Protein shisa-5 (235 aa).

The first 26 residues, 1–26, serve as a signal peptide directing secretion; it reads MAAPAPSLWTLLLLLLLLPPPPGAHG. The Extracellular portion of the chain corresponds to 27–105; that stretch reads ELCRPFGEDN…SSFDSDPMSG (79 aa). The helical transmembrane segment at 106–126 threads the bilayer; the sequence is FGATVAIGVTIFVVFIATIII. The Cytoplasmic portion of the chain corresponds to 127-235; sequence CFTCSCCCLY…TYMDSLKTIP (109 aa). The disordered stretch occupies residues 157 to 235; the sequence is APYPQPQPQP…TYMDSLKTIP (79 aa). Composition is skewed to pro residues over residues 159–172 and 181–211; these read YPQP…PSYP and PMPP…PPPY.

Belongs to the shisa family. As to quaternary structure, interacts with PDCD6; PDCD6 can stabilize SHISA5. Spleen and thymus.

Its subcellular location is the endoplasmic reticulum membrane. It localises to the nucleus membrane. Its function is as follows. Can induce apoptosis in a caspase-dependent manner and plays a role in p53/TP53-dependent apoptosis. The polypeptide is Protein shisa-5 (Shisa5) (Mus musculus (Mouse)).